The sequence spans 358 residues: Protein RecA 2 (358 aa).

69-76 (GPESSGKT) is a binding site for ATP. The interval 331 to 358 (GIGKSGAPSPRRRTSPRRPKVAARSAAV) is disordered. Residues 340–351 (PRRRTSPRRPKV) are compositionally biased toward basic residues.

It belongs to the RecA family.

It localises to the cytoplasm. Can catalyze the hydrolysis of ATP in the presence of single-stranded DNA, the ATP-dependent uptake of single-stranded DNA by duplex DNA, and the ATP-dependent hybridization of homologous single-stranded DNAs. It interacts with LexA causing its activation and leading to its autocatalytic cleavage. The protein is Protein RecA 2 of Myxococcus xanthus.